Here is a 271-residue protein sequence, read N- to C-terminus: p-hydroxybenzoate hydroxylase transcriptional activator (271 aa).

The HTH iclR-type domain occupies 23–83 (IAGLAKGLAL…TDEHYFWLTH (61 aa)). Positions 45–64 (VTQVAERTGISRTAARRYLK) form a DNA-binding region, H-T-H motif. The IclR-ED domain maps to 98-271 (LPKVAQSFLN…NTANELRNLV (174 aa)).

Positive regulator of the pobA gene for p-hydroxybenzoate hydroxylase. The chain is p-hydroxybenzoate hydroxylase transcriptional activator (pobR) from Acinetobacter baylyi (strain ATCC 33305 / BD413 / ADP1).